A 549-amino-acid chain; its full sequence is Tigger transposable element-derived protein 7 (549 aa).

Positions 1–52 constitute an HTH psq-type domain; that stretch reads MNKRGKYTTLNLEEKMKVLSRIEAGRSLKSVMDEFGISKSTFYDIKKNKKLI. DNA-binding regions (H-T-H motif) lie at residues 28 to 48 and 101 to 132; these read LKSVMDEFGISKSTFYDIKKN and VELQAAAERFARCFGRTDFKASTGWLFRFRNR. The region spanning 68 to 139 is the HTH CENPB-type domain; the sequence is KRKRTTGAKY…RNRHAIGNRK (72 aa). The DDE-1 domain maps to 169 to 399; that stretch reads LCLAQLYSGD…VKQITIANAW (231 aa). Positions 527–549 are disordered; the sequence is FLKPRPHNIKDSFSGPSTSGSNH. Positions 540–549 are enriched in polar residues; the sequence is SGPSTSGSNH.

Belongs to the tigger transposable element derived protein family. In terms of tissue distribution, expressed in all tissues tested. Higher expression in testis and ovary.

It localises to the nucleus. The sequence is that of Tigger transposable element-derived protein 7 (TIGD7) from Homo sapiens (Human).